The chain runs to 289 residues: D-alanine aminotransferase (289 aa).

Y31 serves as a coordination point for substrate. Residue R50 coordinates pyridoxal 5'-phosphate. Residues R99 and H101 each contribute to the substrate site. K147 functions as the Proton acceptor in the catalytic mechanism. An N6-(pyridoxal phosphate)lysine modification is found at K147. E179 is a binding site for pyridoxal 5'-phosphate.

The protein belongs to the class-IV pyridoxal-phosphate-dependent aminotransferase family. Homodimer. Pyridoxal 5'-phosphate serves as cofactor.

It catalyses the reaction D-alanine + 2-oxoglutarate = D-glutamate + pyruvate. Functionally, acts on the D-isomers of alanine, leucine, aspartate, glutamate, aminobutyrate, norvaline and asparagine. The enzyme transfers an amino group from a substrate D-amino acid to the pyridoxal phosphate cofactor to form pyridoxamine and an alpha-keto acid in the first half-reaction. The second half-reaction is the reverse of the first, transferring the amino group from the pyridoxamine to a second alpha-keto acid to form the product D-amino acid via a ping-pong mechanism. This is an important process in the formation of D-alanine and D-glutamate, which are essential bacterial cell wall components. The polypeptide is D-alanine aminotransferase (dat) (Listeria innocua serovar 6a (strain ATCC BAA-680 / CLIP 11262)).